The following is a 478-amino-acid chain: G2/mitotic-specific cyclin-B (478 aa).

A disordered region spans residues 1 to 153; it reads MNENDENGPS…KTIQQEEPPR (153 aa). Positions 16-31 are enriched in low complexity; sequence AKAAALTTDAPAANGA. Over residues 65 to 74 the composition is skewed to basic and acidic residues; sequence DNGETKDAKK. A compositionally biased stretch (polar residues) spans 77 to 102; it reads SKTGLTSKATMQSGGVQKLSRSNLSR. Residues 110–121 are compositionally biased toward basic and acidic residues; the sequence is NNVKKPATEAKR. Residues 133–145 are compositionally biased toward polar residues; it reads KRTSSQKSLQEKT.

The protein belongs to the cyclin family. Cyclin AB subfamily.

Essential for the control of the cell cycle at the G2/M (mitosis) transition. Interacts with the CDC2 protein kinase to form MPF. G2/M cyclins accumulate steadily during G2 and are abruptly destroyed at mitosis. In Emericella nidulans (strain FGSC A4 / ATCC 38163 / CBS 112.46 / NRRL 194 / M139) (Aspergillus nidulans), this protein is G2/mitotic-specific cyclin-B (nimE).